Here is a 313-residue protein sequence, read N- to C-terminus: 3'-5' exoribonuclease YhaM (313 aa).

An HD domain is found at 163 to 279 (HVVSMLRLAK…LHQIDLMDAS (117 aa)).

This sequence belongs to the YhaM family.

In terms of biological role, shows a 3'-5' exoribonuclease activity. This is 3'-5' exoribonuclease YhaM from Listeria monocytogenes serotype 4b (strain CLIP80459).